The primary structure comprises 57 residues: Temporin-ALk (57 aa).

The first 22 residues, 1-22 (MFTLKKSLLLLFFLGTINLSLC), serve as a signal peptide directing secretion. The propeptide occupies 23-46 (EQERNAEEERRDDLGERQAEVEKR). Serine amide is present on Ser-56.

The protein belongs to the frog skin active peptide (FSAP) family. Temporin subfamily. In terms of tissue distribution, expressed by the skin glands.

It localises to the secreted. In terms of biological role, antimicrobial peptide with weak activity against Gram-positive and Gram-negative bacteria and against fungi. Has been tested against S.aureus (MIC=15.0 ug/mL), B.pumilus (no activity detected), B.cereus (no activity detected), E.coli (MIC=30.0 ug/mL), B.dysenteriae (MIC=60.0 ug/mL), A.cacoaceticus (MIC=75.0 ug/mL), P.aeruginosa (MIC=25.0 ug/mL) and C.albicans (MIC=15.0 ug/mL). Also shows a weak hemolytic activity. This is Temporin-ALk from Amolops loloensis (Lolokou Sucker Frog).